We begin with the raw amino-acid sequence, 897 residues long: MGMATYAVVDLETTGNQLDFDDIIQIGITFVRNNQIIDTYHSMIRTNLEIPPFIQALTSIEENMLQQAPYFNQVAQEIYDKIKDCIFVAHNVDFDLNFIKKAFKDCNIQYRPKKVIDTLEIFKIAFPTDKSYQLSELAEAHGITLANAHRADEDAATTAKLMILAFEKFEKLPLDTLKQLYYLSKQLKYDLYDIFFEMVRQYDAKPLDKSYEKFEQIIYRKQVDFKKPTTNYNGSLKSLYSKAVDQLGLTYRPQQLYLAETILDQLMHSEKAMIEASLGSGKSLAYLLAALMYNIETGKHVMISTNTKLLQSQLLEKDIPAMNEALNFKINALLIKSKSDYISLGLISQILKDDTSNYEVNILKMQLLIWITETPSGDIQELNLKGGQKMYFDQKIETYVPARHDVHYYNFIKRNAQNIQIGITNHAHLIHSDVENSIYQLFDDCIVDEAHRLPDYALNQVTNELSYADIKYQLGLIGKNENEKLLKAIDQLEKQRILEKLDIAPIDIFGLKASMNEIHELNEQLFSTIFTIINDSDVYDDDIHRFHNVFTFETKDILKDLHAIIDKLNKTLEIFNGISHKTVKSLRKQLLYLKDKFKNIEQSLKAGHTSFISIKNLSQKSTIRLYVKDYAVKDVLTKQVLEKFKSLIFISGTLKFNHSFEAFKQLFNKDVHFNTFEVNTSLQSAKNTSVFIPSDVASYQYKNIDEYVASIVSYIIEYTTITSSKCLVLFTSYKMMHMVQDMLNELPEFEDYVVLTQQQNQNYKIVQQFNNFDKAILLGTSTFFEGFDFQANGIKCVMIAKLPFMNKHNAKYWLMDSEFTSTFKEYVLPDAVTRFRQGLGRLIRNENDRGIIVSFDDRLINSNYKNFFEQTLENYRQKKGDIQQFGKLLRQIQKKKK.

One can recognise an Exonuclease domain in the interval 8 to 161 (VVDLETTGNQ…DEDAATTAKL (154 aa)). A Helicase ATP-binding domain is found at 241–496 (SKAVDQLGLT…KAIDQLEKQR (256 aa)). 276–283 (ASLGSGKS) contributes to the ATP binding site. A DEAH box motif is present at residues 448 to 451 (DEAH). Residues 703-893 (NIDEYVASIV…QFGKLLRQIQ (191 aa)) enclose the Helicase C-terminal domain.

It belongs to the helicase family. DinG subfamily. Type 2 sub-subfamily.

Functionally, 3'-5' exonuclease. This Staphylococcus aureus (strain USA300) protein is 3'-5' exonuclease DinG.